The sequence spans 443 residues: Glutamate--tRNA ligase 1 (443 aa).

A 'HIGH' region motif is present at residues Pro-8–Asn-18. A 'KMSKS' region motif is present at residues Lys-239 to Arg-243. Residue Lys-242 coordinates ATP.

It belongs to the class-I aminoacyl-tRNA synthetase family. Glutamate--tRNA ligase type 1 subfamily. In terms of assembly, monomer.

The protein resides in the cytoplasm. The enzyme catalyses tRNA(Glu) + L-glutamate + ATP = L-glutamyl-tRNA(Glu) + AMP + diphosphate. Catalyzes the attachment of glutamate to tRNA(Glu) in a two-step reaction: glutamate is first activated by ATP to form Glu-AMP and then transferred to the acceptor end of tRNA(Glu). The sequence is that of Glutamate--tRNA ligase 1 from Rhizorhabdus wittichii (strain DSM 6014 / CCUG 31198 / JCM 15750 / NBRC 105917 / EY 4224 / RW1) (Sphingomonas wittichii).